We begin with the raw amino-acid sequence, 363 residues long: Phosphoserine aminotransferase (363 aa).

R41 contacts L-glutamate. Residues 75–76 (AS), W100, T155, D175, and Q198 contribute to the pyridoxal 5'-phosphate site. K199 bears the N6-(pyridoxal phosphate)lysine mark. 239-240 (NT) is a pyridoxal 5'-phosphate binding site.

This sequence belongs to the class-V pyridoxal-phosphate-dependent aminotransferase family. SerC subfamily. As to quaternary structure, homodimer. It depends on pyridoxal 5'-phosphate as a cofactor.

It localises to the cytoplasm. It carries out the reaction O-phospho-L-serine + 2-oxoglutarate = 3-phosphooxypyruvate + L-glutamate. It catalyses the reaction 4-(phosphooxy)-L-threonine + 2-oxoglutarate = (R)-3-hydroxy-2-oxo-4-phosphooxybutanoate + L-glutamate. It functions in the pathway amino-acid biosynthesis; L-serine biosynthesis; L-serine from 3-phospho-D-glycerate: step 2/3. Its function is as follows. Catalyzes the reversible conversion of 3-phosphohydroxypyruvate to phosphoserine and of 3-hydroxy-2-oxo-4-phosphonooxybutanoate to phosphohydroxythreonine. The sequence is that of Phosphoserine aminotransferase from Streptococcus agalactiae serotype III (strain NEM316).